Here is a 1162-residue protein sequence, read N- to C-terminus: DNA-directed RNA polymerase subunit beta (1162 aa).

Belongs to the RNA polymerase beta chain family. In terms of assembly, the RNAP catalytic core consists of 2 alpha, 1 beta, 1 beta' and 1 omega subunit. When a sigma factor is associated with the core the holoenzyme is formed, which can initiate transcription.

It catalyses the reaction RNA(n) + a ribonucleoside 5'-triphosphate = RNA(n+1) + diphosphate. DNA-dependent RNA polymerase catalyzes the transcription of DNA into RNA using the four ribonucleoside triphosphates as substrates. The protein is DNA-directed RNA polymerase subunit beta of Clavibacter michiganensis subsp. michiganensis (strain NCPPB 382).